A 1013-amino-acid chain; its full sequence is Dichlorochromopyrrolate synthase (1013 aa).

The protein belongs to the RebD family. As to quaternary structure, homodimer. Heme serves as cofactor.

The enzyme catalyses 2 3-(7-chloroindol-3-yl)-2-iminopropanoate + H2O2 = dichlorochromopyrrolate + NH4(+) + 2 H2O + H(+). It catalyses the reaction 2 2-iminio-3-(indol-3-yl)propanoate + H2O2 = chromopyrrolate + NH4(+) + 2 H2O + H(+). The catalysed reaction is 2 H2O2 = O2 + 2 H2O. Involved in the biosynthesis of the indolocarbazole antitumor agent rebeccamycin. Catalyzes the hydrogen peroxide-dependent dimerization of two L-tryptophan-derived molecules (imine form of indole 3-pyruvate (IPA)), to form dichlorochromopyrrolic acid (CPA), the precursor for the six-ring bisindolopyrrolocarbazole scaffold of the rebeccamycin. The hydrogen peroxide is provided together with iminoindolpropanoate by RebO. Due to the instability of indole 3-pyruvate (IPA), which is hydrolyzed in solution and exits in equilibrium with the predominant ketone form of IPA, the concerted functioning of the RebO/RebD system appears to prevent the buildup of significant amounts of IPA and its imine in solution, effectively shepherding the imine further down the biosynthetic chain. This chain is Dichlorochromopyrrolate synthase (rebD), found in Lentzea aerocolonigenes (Lechevalieria aerocolonigenes).